The sequence spans 329 residues: 4-hydroxythreonine-4-phosphate dehydrogenase (329 aa).

Substrate is bound by residues His136 and Thr137. Residues His166, His211, and His266 each contribute to the a divalent metal cation site. Lys274, Asn283, and Arg292 together coordinate substrate.

Belongs to the PdxA family. In terms of assembly, homodimer. Zn(2+) serves as cofactor. Requires Mg(2+) as cofactor. It depends on Co(2+) as a cofactor.

It localises to the cytoplasm. The catalysed reaction is 4-(phosphooxy)-L-threonine + NAD(+) = 3-amino-2-oxopropyl phosphate + CO2 + NADH. Its pathway is cofactor biosynthesis; pyridoxine 5'-phosphate biosynthesis; pyridoxine 5'-phosphate from D-erythrose 4-phosphate: step 4/5. Functionally, catalyzes the NAD(P)-dependent oxidation of 4-(phosphooxy)-L-threonine (HTP) into 2-amino-3-oxo-4-(phosphooxy)butyric acid which spontaneously decarboxylates to form 3-amino-2-oxopropyl phosphate (AHAP). This Shigella boydii serotype 4 (strain Sb227) protein is 4-hydroxythreonine-4-phosphate dehydrogenase.